Here is a 70-residue protein sequence, read N- to C-terminus: Large ribosomal subunit protein eL38 (70 aa).

This sequence belongs to the eukaryotic ribosomal protein eL38 family.

This Bombyx mori (Silk moth) protein is Large ribosomal subunit protein eL38 (RpL38).